The sequence spans 422 residues: Acylglycerol kinase, mitochondrial (422 aa).

Lys6 is modified (N6-acetyllysine). The hydrophobic stretch occupies residues 15–31 (TTAGLCLLTWGGHWLYG). Positions 58 to 199 (AQVKKATVFL…LDVLQIKGEK (142 aa)) constitute a DAGKc domain. The tract at residues 249–271 (QASISYTGPTERPPSEPEETPVQ) is disordered.

Belongs to the AGK family. Component of the TIM22 complex, which core is composed of TIMM22, associated with TIMM10 (TIMM10A and/or TIMM10B), TIMM9, AGK and TIMM29. Interacts with SMIM26. The cofactor is Mg(2+).

The protein resides in the mitochondrion inner membrane. Its subcellular location is the mitochondrion intermembrane space. The enzyme catalyses a monoacylglycerol + ATP = a monoacyl-sn-glycero-3-phosphate + ADP + H(+). It carries out the reaction a 1,2-diacyl-sn-glycerol + ATP = a 1,2-diacyl-sn-glycero-3-phosphate + ADP + H(+). It catalyses the reaction an N-acylsphing-4-enine + ATP = an N-acylsphing-4-enine 1-phosphate + ADP + H(+). The catalysed reaction is 1-(9Z-octadecenoyl)-sn-glycerol + ATP = 1-(9Z-octadecenoyl)-sn-glycero-3-phosphate + ADP + H(+). The enzyme catalyses 1,2-di-(9Z-octadecenoyl)-sn-glycerol + ATP = 1,2-di-(9Z-octadecenoyl)-sn-glycero-3-phosphate + ADP + H(+). It carries out the reaction a 1-acyl-sn-glycerol + ATP = a 1-acyl-sn-glycero-3-phosphate + ADP + H(+). It catalyses the reaction 1-hexadecanoyl-sn-glycerol + ATP = 1-hexadecanoyl-sn-glycero-3-phosphate + ADP + H(+). The catalysed reaction is a 2-acylglycerol + ATP = a 2-acyl-sn-glycerol 3-phosphate + ADP + H(+). The enzyme catalyses 2-(5Z,8Z,11Z,14Z-eicosatetraenoyl)-glycerol + ATP = 2-(5Z,8Z,11Z,14Z-eicosatetraenoyl)-sn-glycero-3-phosphate + ADP + H(+). It carries out the reaction 1-(5Z,8Z,11Z,14Z-eicosatetraenoyl)-sn-glycerol + ATP = 1-(5Z,8Z,11Z,14Z-eicosatetraenoyl)-sn-glycero-3-phosphate + ADP + H(+). It catalyses the reaction N-(hexanoyl)sphing-4-enine + ATP = N-hexanoylsphing-4-enine 1-phosphate + ADP + H(+). The protein operates within lipid metabolism; glycerolipid metabolism. Its function is as follows. Lipid kinase that can phosphorylate both monoacylglycerol and diacylglycerol to form lysophosphatidic acid (LPA) and phosphatidic acid (PA), respectively. Phosphorylates ceramide but not sphingosine. Phosphorylates 1,2-dioleoylglycerol more rapidly than 2,3-dioleoylglycerol. Independently of its lipid kinase activity, acts as a component of the TIM22 complex. The TIM22 complex mediates the import and insertion of multi-pass transmembrane proteins into the mitochondrial inner membrane by forming a twin-pore translocase that uses the membrane potential as the external driving force. In the TIM22 complex, required for the import of a subset of metabolite carriers into mitochondria, such as ANT1/SLC25A4 and SLC25A24, while it is not required for the import of TIMM23. Overexpression increases the formation and secretion of LPA, resulting in transactivation of EGFR and activation of the downstream MAPK signaling pathway, leading to increased cell growth. This is Acylglycerol kinase, mitochondrial from Pongo abelii (Sumatran orangutan).